The following is a 66-amino-acid chain: UPF0337 protein RPA4217 (66 aa).

This sequence belongs to the UPF0337 (CsbD) family.

In Rhodopseudomonas palustris (strain ATCC BAA-98 / CGA009), this protein is UPF0337 protein RPA4217.